The primary structure comprises 388 residues: Flap endonuclease 1 (388 aa).

The tract at residues Met1–Arg104 is N-domain. Asp34 serves as a coordination point for Mg(2+). Positions 47 and 70 each coordinate DNA. Mg(2+)-binding residues include Asp86, Glu158, Glu160, Asp179, and Asp181. The segment at Glu122–Tyr253 is I-domain. Glu158 contributes to the DNA binding site. Positions 231 and 233 each coordinate DNA. Residue Asp233 participates in Mg(2+) binding. The interaction with PCNA stretch occupies residues Thr336–Phe344. The tract at residues Ala355–Lys388 is disordered.

This sequence belongs to the XPG/RAD2 endonuclease family. FEN1 subfamily. As to quaternary structure, interacts with PCNA. Three molecules of FEN1 bind to one PCNA trimer with each molecule binding to one PCNA monomer. PCNA stimulates the nuclease activity without altering cleavage specificity. Mg(2+) is required as a cofactor. In terms of processing, phosphorylated. Phosphorylation upon DNA damage induces relocalization to the nuclear plasma.

It is found in the nucleus. It localises to the nucleolus. The protein localises to the nucleoplasm. Its subcellular location is the mitochondrion. Functionally, structure-specific nuclease with 5'-flap endonuclease and 5'-3' exonuclease activities involved in DNA replication and repair. During DNA replication, cleaves the 5'-overhanging flap structure that is generated by displacement synthesis when DNA polymerase encounters the 5'-end of a downstream Okazaki fragment. It enters the flap from the 5'-end and then tracks to cleave the flap base, leaving a nick for ligation. Also involved in the long patch base excision repair (LP-BER) pathway, by cleaving within the apurinic/apyrimidinic (AP) site-terminated flap. Acts as a genome stabilization factor that prevents flaps from equilibrating into structures that lead to duplications and deletions. Also possesses 5'-3' exonuclease activity on nicked or gapped double-stranded DNA, and exhibits RNase H activity. Also involved in replication and repair of rDNA and in repairing mitochondrial DNA. The sequence is that of Flap endonuclease 1 from Drosophila willistoni (Fruit fly).